The sequence spans 575 residues: Transcription factor COE2 (575 aa).

The interval 62-65 is interaction with DNA; sequence RKSN. Residues 150 to 169 form a C5-type zinc finger; sequence CRVLLTHEVMCSRCCEKKSC. Interaction with DNA regions lie at residues 196–203 and 235–238; these read NCLKTAGN and NNSK. In terms of domain architecture, IPT/TIG spans 253 to 336; sequence PCIKAISPSE…KGAPGRFIYT (84 aa). Residues 441 to 453 show a composition bias toward polar residues; that stretch reads STQGNNQGYIRNT. The tract at residues 441–479 is disordered; the sequence is STQGNNQGYIRNTSSISPRGYSSSSTPQQSNYSTSSNSM. Positions 454-479 are enriched in low complexity; that stretch reads SSISPRGYSSSSTPQQSNYSTSSNSM.

Belongs to the COE family. As to quaternary structure, forms either a homodimer or a heterodimer with a related family member. Interacts with SIX1. As to expression, in adult expressed in olfactory epithelium and at a much lower level in Purkinje cells of the cerebellum. In embryo expressed in epithalamus, in cells near the ventricular zone of mesencephalon and on the ventral surface of rhombencephalon, in the developing vomeronasal organ, at a lower level in developing spinal cord. Not expressed in developing retina, inner ear, dorsal root ganglia, trigeminal ganglia and glossopharyngeal ganglia.

Its subcellular location is the nucleus. Transcription factor that, in osteoblasts, activates the decoy receptor for RANKL, TNFRSF11B, which in turn regulates osteoclast differentiation. Acts in synergy with the Wnt-responsive LEF1/CTNNB1 pathway. Recognizes variations of the palindromic sequence 5'-ATTCCCNNGGGAATT-3'. This chain is Transcription factor COE2 (Ebf2), found in Mus musculus (Mouse).